The primary structure comprises 208 residues: Pectinesterase inhibitor 6 (208 aa).

Residues 1-30 (MTSSSSSPITFTLLLLLSLLVALNPNPSLA) form the signal peptide. Cys-53 and Cys-62 are oxidised to a cystine. 2 N-linked (GlcNAc...) asparagine glycosylation sites follow: Asn-54 and Asn-75. The cysteines at positions 118 and 165 are disulfide-linked.

The protein belongs to the PMEI family.

It is found in the secreted. Its subcellular location is the extracellular space. The protein resides in the apoplast. Pectin methylesterase (PME) inhibitor that targets PME from seeds and modulates PME activity and pectin methylesterification during seed germination. Promotes mucilage release by limiting methylesterification of homogalacturonan in seed coat epidermal cells. This chain is Pectinesterase inhibitor 6, found in Arabidopsis thaliana (Mouse-ear cress).